Reading from the N-terminus, the 551-residue chain is Serine/threonine-protein kinase ppk21 (551 aa).

The segment at 24–43 (EARGERNPVKPQSSNVVPGT) is disordered. Residues 55 to 315 (YVFGDIIGDG…TQQIKQFPFF (261 aa)) enclose the Protein kinase domain. Residues 65 to 67 (SFS) and Lys-84 contribute to the ATP site. The tract at residues 86 to 131 (LDKKYIVKENKVKYVNIERDSMMRLNGFPGISRLFHTFQDDLKLYY) is PIF-pocket. Residues 134-136 (ELA) and Glu-140 each bind ATP. Residue Asp-179 is the Proton acceptor of the active site. ATP is bound by residues Glu-183 and Asp-197. The residue at position 220 (Ser-220) is a Phosphoserine; by autocatalysis. Phosphoserine is present on Ser-538.

It belongs to the protein kinase superfamily. AGC Ser/Thr protein kinase family. PDPK1 subfamily.

Its subcellular location is the cytoplasm. It is found in the nucleus. It localises to the cytoskeleton. The protein resides in the microtubule organizing center. The protein localises to the spindle pole body. It carries out the reaction L-seryl-[protein] + ATP = O-phospho-L-seryl-[protein] + ADP + H(+). It catalyses the reaction L-threonyl-[protein] + ATP = O-phospho-L-threonyl-[protein] + ADP + H(+). This Schizosaccharomyces pombe (strain 972 / ATCC 24843) (Fission yeast) protein is Serine/threonine-protein kinase ppk21 (ppk21).